The primary structure comprises 453 residues: Ribosomal protein uS12 methylthiotransferase RimO (453 aa).

Residues P5–P120 enclose the MTTase N-terminal domain. The [4Fe-4S] cluster site is built by C14, C50, C79, C151, C155, and C158. The 247-residue stretch at L137–R383 folds into the Radical SAM core domain. Residues Q385–V453 enclose the TRAM domain.

The protein belongs to the methylthiotransferase family. RimO subfamily. It depends on [4Fe-4S] cluster as a cofactor.

It is found in the cytoplasm. The enzyme catalyses L-aspartate(89)-[ribosomal protein uS12]-hydrogen + (sulfur carrier)-SH + AH2 + 2 S-adenosyl-L-methionine = 3-methylsulfanyl-L-aspartate(89)-[ribosomal protein uS12]-hydrogen + (sulfur carrier)-H + 5'-deoxyadenosine + L-methionine + A + S-adenosyl-L-homocysteine + 2 H(+). Functionally, catalyzes the methylthiolation of an aspartic acid residue of ribosomal protein uS12. The polypeptide is Ribosomal protein uS12 methylthiotransferase RimO (Burkholderia cenocepacia (strain ATCC BAA-245 / DSM 16553 / LMG 16656 / NCTC 13227 / J2315 / CF5610) (Burkholderia cepacia (strain J2315))).